A 616-amino-acid chain; its full sequence is Glycogenin-1 (616 aa).

3 residues coordinate UDP: leucine 10, tyrosine 16, and arginine 95. Residues leucine 10, tyrosine 16, arginine 95, lysine 104, aspartate 120, aspartate 122, asparagine 158, serine 159, aspartate 185, aspartate 188, and glutamine 189 each contribute to the UDP-alpha-D-glucose site. Residues aspartate 120 and aspartate 122 each contribute to the UDP site. 2 residues coordinate Mn(2+): aspartate 120 and aspartate 122. O-linked (Glc...) tyrosine glycosylation occurs at tyrosine 230. UDP is bound by residues histidine 247, glycine 250, and lysine 253. Histidine 247 contributes to the Mn(2+) binding site. 2 residues coordinate UDP-alpha-D-glucose: glycine 250 and lysine 253. Residues 283–302 are compositionally biased toward basic and acidic residues; sequence HQLNNEVSKPKISDSDKTET. Disordered regions lie at residues 283-320, 335-354, and 371-516; these read HQLNNEVSKPKISDSDKTETPETITPVDAPPSNEPTTN, NQNAEPVPNSDHSPAPNPVP, and TNQP…SVDD. A compositionally biased stretch (basic and acidic residues) spans 377–386; sequence ESREYSKEND. Residues 400–419 are compositionally biased toward polar residues; it reads SPPNSTQEPNSSYSVVSTQA. Positions 450–461 are enriched in low complexity; that stretch reads STAASSNNNVSN. 2 stretches are compositionally biased toward polar residues: residues 462 to 485 and 492 to 503; these read QPDNKNFSNSKENNISVEPSPSNP and DNIQKPSVSTND. An O-linked (Glc...) tyrosine glycan is attached at tyrosine 598.

The protein belongs to the glycosyltransferase 8 family. Glycogenin subfamily. Requires Mn(2+) as cofactor.

The protein resides in the cytoplasm. It localises to the vacuole. It carries out the reaction L-tyrosyl-[glycogenin] + UDP-alpha-D-glucose = alpha-D-glucosyl-L-tyrosyl-[glycogenin] + UDP + H(+). It catalyses the reaction [1,4-alpha-D-glucosyl](n)-L-tyrosyl-[glycogenin] + UDP-alpha-D-glucose = [1,4-alpha-D-glucosyl](n+1)-L-tyrosyl-[glycogenin] + UDP + H(+). Its function is as follows. Self-glucosylating initiator of glycogen synthesis. It catalyzes the formation of a short alpha (1,4)-glucosyl chain covalently attached via a glucose 1-O-tyrosyl linkage to internal tyrosine residues and these chains act as primers for the elongation reaction catalyzed by glycogen synthase. Capable of transferring glucosyl residues to unbound acceptors such as free oligoglucans or oligoglucan derivatives. The chain is Glycogenin-1 (GLG1) from Saccharomyces cerevisiae (strain YJM789) (Baker's yeast).